A 392-amino-acid polypeptide reads, in one-letter code: Proteasome-activating nucleotidase (392 aa).

Positions 19-53 form a coiled coil; the sequence is IVRLLEEKIESLTKELEKLRQDLNWYKGELEKLLA. ATP-binding positions include 178–183 and Tyr317; that span reads GTGKTL. Positions 390–392 are docks into pockets in the proteasome alpha-ring to cause gate opening; the sequence is KYV.

Belongs to the AAA ATPase family. Homohexamer. The hexameric complex has a two-ring architecture resembling a top hat that caps the 20S proteasome core at one or both ends. Upon ATP-binding, the C-terminus of PAN interacts with the alpha-rings of the proteasome core by binding to the intersubunit pockets.

It is found in the cytoplasm. ATPase which is responsible for recognizing, binding, unfolding and translocation of substrate proteins into the archaeal 20S proteasome core particle. Is essential for opening the gate of the 20S proteasome via an interaction with its C-terminus, thereby allowing substrate entry and access to the site of proteolysis. Thus, the C-termini of the proteasomal ATPase function like a 'key in a lock' to induce gate opening and therefore regulate proteolysis. Unfolding activity requires energy from ATP hydrolysis, whereas ATP binding alone promotes ATPase-20S proteasome association which triggers gate opening, and supports translocation of unfolded substrates. The protein is Proteasome-activating nucleotidase of Sulfurisphaera tokodaii (strain DSM 16993 / JCM 10545 / NBRC 100140 / 7) (Sulfolobus tokodaii).